The chain runs to 252 residues: 14-3-3 protein 10 (252 aa).

Belongs to the 14-3-3 family. As to quaternary structure, homodimer.

The chain is 14-3-3 protein 10 (TFT10) from Solanum lycopersicum (Tomato).